The chain runs to 465 residues: MQQHYQFDAIVIGSGPGGEGAAMGLVKQGARVAVIERYNNVGGGCTHWGTIPSKALRHAVSRIIEFNQNPLYNNSRTLSATFPDILRHADNVINQQTRMRQGFYERNQCKLFAGDARFIDANTVSVSYMDGTQDTIRADHIVIACGSRPYNPSSVDFNHPRIYNSDSILELNHEPRHVIIYGAGVIGCEYASIFRGLNVKVDLINTRDRLLAFLDQEMSDSLSYHFWNNGVVIRHNEEFEKIEGTDDGVIVHLKSGKKVKADCLLYANGRTGNTDSLGLENVGLESDSRGLLKVNSMYQTALSHIYAVGDVIGYPSLASAAYDQGRIAAQAIASGEASGHLIEDIPTGIYTIPEISSVGKTEQELTAMKVPYEVGRAQFKHLARAQIAGMNVGSLKILFHRDTLQILGIHCFGERAAEIIHIGQAIMEQKGEGNTIEYFVNTTFNYPTMAEAYRVAALNGLNRLF.

Residue 36–45 participates in FAD binding; it reads ERYNNVGGGC.

It belongs to the class-I pyridine nucleotide-disulfide oxidoreductase family. The cofactor is FAD.

The protein localises to the cytoplasm. It carries out the reaction NAD(+) + NADPH = NADH + NADP(+). Conversion of NADPH, generated by peripheral catabolic pathways, to NADH, which can enter the respiratory chain for energy generation. The chain is Soluble pyridine nucleotide transhydrogenase from Serratia proteamaculans (strain 568).